A 156-amino-acid chain; its full sequence is Nucleosome assembly protein 1-like 5 (156 aa).

Positions M1–D16 are enriched in basic and acidic residues. Residues M1–E58 form a disordered region. The span at A34 to A49 shows a compositional bias: low complexity. Residues V68 to K94 adopt a coiled-coil conformation. A disordered region spans residues T120 to K156. The span at E122–A143 shows a compositional bias: acidic residues.

Belongs to the nucleosome assembly protein (NAP) family.

The protein localises to the nucleus. This chain is Nucleosome assembly protein 1-like 5 (Nap1l5), found in Mus musculus (Mouse).